The chain runs to 81 residues: Photosystem I iron-sulfur center (81 aa).

2 4Fe-4S ferredoxin-type domains span residues 2–31 (SHTV…MVPW) and 39–68 (VASS…IRVY). Positions 11, 14, 17, 21, 48, 51, 54, and 58 each coordinate [4Fe-4S] cluster.

The cyanobacterial PSI reaction center is composed of one copy each of PsaA,B,C,D,E,F,I,J,K,L,M and X, and forms trimeric complexes. [4Fe-4S] cluster serves as cofactor.

The protein localises to the cellular thylakoid membrane. The catalysed reaction is reduced [plastocyanin] + hnu + oxidized [2Fe-2S]-[ferredoxin] = oxidized [plastocyanin] + reduced [2Fe-2S]-[ferredoxin]. In terms of biological role, apoprotein for the two 4Fe-4S centers FA and FB of photosystem I (PSI); essential for photochemical activity. FB is the terminal electron acceptor of PSI, donating electrons to ferredoxin. The C-terminus interacts with PsaA/B/D and helps assemble the protein into the PSI complex. Required for binding of PsaD and PsaE to PSI. PSI is a plastocyanin/cytochrome c6-ferredoxin oxidoreductase, converting photonic excitation into a charge separation, which transfers an electron from the donor P700 chlorophyll pair to the spectroscopically characterized acceptors A0, A1, FX, FA and FB in turn. The polypeptide is Photosystem I iron-sulfur center (Trichormus variabilis (strain ATCC 29413 / PCC 7937) (Anabaena variabilis)).